A 1099-amino-acid polypeptide reads, in one-letter code: Carbamoyl phosphate synthase large chain (1099 aa).

The carboxyphosphate synthetic domain stretch occupies residues 1 to 402 (MPKREDIKRI…ALGKALRSLE (402 aa)). Arg-129, Arg-169, Gly-175, Gly-176, Glu-208, Val-210, Glu-215, Gly-241, Ile-242, His-243, Gln-285, and Glu-299 together coordinate ATP. The ATP-grasp 1 domain maps to 133 to 328 (KETMEKAGLE…IAKVAALLAV (196 aa)). Mg(2+)-binding residues include Gln-285, Glu-299, and Asn-301. 3 residues coordinate Mn(2+): Gln-285, Glu-299, and Asn-301. The interval 403–541 (LDAAPKLDLE…STYNGVENEA (139 aa)) is oligomerization domain. Residues 542 to 944 (VPSDREKIMI…AFAKAQIAAG (403 aa)) form a carbamoyl phosphate synthetic domain region. The ATP-grasp 2 domain occupies 666-857 (AKLLKQIGLK…VARIAAKIMV (192 aa)). Positions 702, 741, 743, 748, 773, 774, 775, 776, 816, and 828 each coordinate ATP. Positions 816, 828, and 830 each coordinate Mg(2+). Gln-816, Glu-828, and Asn-830 together coordinate Mn(2+). Positions 945-1099 (NPLPTTGAIL…VRRLTDTWKM (155 aa)) constitute an MGS-like domain. The tract at residues 945-1099 (NPLPTTGAIL…VRRLTDTWKM (155 aa)) is allosteric domain.

It belongs to the CarB family. In terms of assembly, composed of two chains; the small (or glutamine) chain promotes the hydrolysis of glutamine to ammonia, which is used by the large (or ammonia) chain to synthesize carbamoyl phosphate. Tetramer of heterodimers (alpha,beta)4. It depends on Mg(2+) as a cofactor. Mn(2+) serves as cofactor.

It carries out the reaction hydrogencarbonate + L-glutamine + 2 ATP + H2O = carbamoyl phosphate + L-glutamate + 2 ADP + phosphate + 2 H(+). The catalysed reaction is hydrogencarbonate + NH4(+) + 2 ATP = carbamoyl phosphate + 2 ADP + phosphate + 2 H(+). It functions in the pathway amino-acid biosynthesis; L-arginine biosynthesis; carbamoyl phosphate from bicarbonate: step 1/1. It participates in pyrimidine metabolism; UMP biosynthesis via de novo pathway; (S)-dihydroorotate from bicarbonate: step 1/3. Its function is as follows. Large subunit of the glutamine-dependent carbamoyl phosphate synthetase (CPSase). CPSase catalyzes the formation of carbamoyl phosphate from the ammonia moiety of glutamine, carbonate, and phosphate donated by ATP, constituting the first step of 2 biosynthetic pathways, one leading to arginine and/or urea and the other to pyrimidine nucleotides. The large subunit (synthetase) binds the substrates ammonia (free or transferred from glutamine from the small subunit), hydrogencarbonate and ATP and carries out an ATP-coupled ligase reaction, activating hydrogencarbonate by forming carboxy phosphate which reacts with ammonia to form carbamoyl phosphate. The sequence is that of Carbamoyl phosphate synthase large chain from Thermotoga maritima (strain ATCC 43589 / DSM 3109 / JCM 10099 / NBRC 100826 / MSB8).